The chain runs to 131 residues: 14.7 kDa heat shock protein (131 aa).

Residues 1–11 show a composition bias toward polar residues; the sequence is MSRNMEVNAGS. The segment at 1 to 20 is disordered; it reads MSRNMEVNAGSSGEIPSPIR. Residues 22–131 form the sHSP domain; it reads RFQKSGSQAV…INVKERILHY (110 aa).

It belongs to the small heat shock protein (HSP20) family. May form oligomeric structures.

Its subcellular location is the cytoplasm. The sequence is that of 14.7 kDa heat shock protein (HSP14.7) from Arabidopsis thaliana (Mouse-ear cress).